An 829-amino-acid polypeptide reads, in one-letter code: MTDNQEIKPKKLTLGNSKLSLNKSFDSLTGAQSFVNAKSKTLVEVRKSSTGSTTTLSLNKERNSLDQTAIDANKEEFNRRLSILKKAAEQSKLNDPSQISTLSKLASINQSANSKIETLETEVEQKQQNAEEEKVEASAKTVQNNEDIQPQTSKKKEETFVKSPLVGMRTRYGIESEKELDKTVDNKVVAPKIKLEEPKKFKKADLFNMLGDDESGSGRTRSLASIKRAREKEKRKLVSQAPEKVYREVTIPEVIGVGDLANAMSERVADVIKELMKLGILANASQTIDADTAELVATNLGHTVKRVQESDVENVLISDDKVEDLRTRAPVVTVMGHVDHGKTSLLDALKSTDIAASETGGITQHIGAYRVTIADDRAITFIDTPGHEAFSEMRSRGAKVTDIVIIVVAADDGIKTQTVEAINHAKAAGVPIIVAINKIDKPDIDIERVKNELYVHEIIGEEAGGDVMVIPISALKKINLDKLEEAILLIAEMQDLKASPFGSAAGVVIESKIEKGRGTLTTILVQRGTLRNGDIIIAGSSYGKVKKMTNDKGLEIVEATPSVPVEIQGLNEVPFAGDKFNVVQNEKQAKDIAEYRMRLAKEKKISIAPRSSLEDLFLKASGNSKIKELPLIIKGDVQGSVEAISGSLLKLPSDEIKLRILHSGVGPITESDVSLAHASSAIIVGFNVRAGANALTAAEKEKVDIRYYSIIYNLIDDVKAIMSGMLDPIVREQYIGSVEIRQIFNITKVGKIAGSYVTKGIIKKGAGVRLLRDNVVIHEGKLKTLKRFKDEVKEVREGYECGIAFENYEDIREGDTVEVFELVQEQRQL.

The segment covering 128 to 137 (QNAEEEKVEA) has biased composition (basic and acidic residues). The disordered stretch occupies residues 128–157 (QNAEEEKVEASAKTVQNNEDIQPQTSKKKE). A compositionally biased stretch (polar residues) spans 140–152 (KTVQNNEDIQPQT). The tr-type G domain occupies 327–497 (TRAPVVTVMG…LLIAEMQDLK (171 aa)). Residues 336 to 343 (GHVDHGKT) form a G1 region. 336–343 (GHVDHGKT) lines the GTP pocket. The interval 361 to 365 (GITQH) is G2. Residues 383-386 (DTPG) are G3. Residues 383–387 (DTPGH) and 437–440 (NKID) each bind GTP. Residues 437-440 (NKID) are G4. The tract at residues 473–475 (SAL) is G5.

The protein belongs to the TRAFAC class translation factor GTPase superfamily. Classic translation factor GTPase family. IF-2 subfamily.

It is found in the cytoplasm. Its function is as follows. One of the essential components for the initiation of protein synthesis. Protects formylmethionyl-tRNA from spontaneous hydrolysis and promotes its binding to the 30S ribosomal subunits. Also involved in the hydrolysis of GTP during the formation of the 70S ribosomal complex. The sequence is that of Translation initiation factor IF-2 from Rickettsia felis (strain ATCC VR-1525 / URRWXCal2) (Rickettsia azadi).